The primary structure comprises 610 residues: UvrABC system protein C (610 aa).

The GIY-YIG domain maps to 16-94; sequence SQPGVYRMYD…IKLYQPRYNV (79 aa). The UVR domain occupies 204–239; that stretch reads DQVLTQLISRMETASQNLEFEEAARIRDQIQAVRRV.

It belongs to the UvrC family. Interacts with UvrB in an incision complex.

It is found in the cytoplasm. In terms of biological role, the UvrABC repair system catalyzes the recognition and processing of DNA lesions. UvrC both incises the 5' and 3' sides of the lesion. The N-terminal half is responsible for the 3' incision and the C-terminal half is responsible for the 5' incision. This is UvrABC system protein C from Escherichia coli (strain SMS-3-5 / SECEC).